A 539-amino-acid polypeptide reads, in one-letter code: MDSQRNILLIALALVSFLLFQQWNVAQNPAPQAVEQAQSGSTLPAPSYADDLDPAPGQVASAKTITVTTDVLTLSIDTVGGDVVTANLNDYSAEFDSEDTFVLLKNEPGHQFIAQSGLVGPQGIDLSSTNRPSYTVSADSFTLAEGQDELRIPMTYQANGLDYTKTFVLKRGSYAIDVEYDVVNNSGNNATFGMYAHLRQNVMDDGGSLTMPTYRGGAYSTEDTRYKKYSFDDMQDRNLSLNLANGQGWAAMIQHYFASAWIPRDEAGSNLYTRVIGNLGDIGVRMPNKTIATGDEASFKATLWVGPKLQDQMAAVAPNLDLVVDYGWLWFIAKPLHTLLSFIQGIVVNWGLAIICLTFIVRGAMYPLTKAQYTSMAKMRMLQPKLTAMRERIGDDRQRMSQEMMELYKKEKVNPLGGCLPILLQMPIFISLYWALMESVELRHSPFFGWITDLSAQDPYYILPLLMGASMFLIQKMSPTTVTDPMQQKIMTFMPVMFTFFFLFFPSGLVLYWLVSNIVTLIQQTLIYRALEKKGLHSK.

A helical membrane pass occupies residues 6 to 26; sequence NILLIALALVSFLLFQQWNVA. Residues 35–44 are compositionally biased toward polar residues; that stretch reads EQAQSGSTLP. The segment at 35-55 is disordered; sequence EQAQSGSTLPAPSYADDLDPA. The next 4 helical transmembrane spans lie at 341–361, 416–436, 454–474, and 495–515; these read SFIQ…TFIV, LGGC…YWAL, LSAQ…MFLI, and PVMF…YWLV.

This sequence belongs to the OXA1/ALB3/YidC family. Type 1 subfamily. Interacts with the Sec translocase complex via SecD. Specifically interacts with transmembrane segments of nascent integral membrane proteins during membrane integration.

It is found in the cell inner membrane. Its function is as follows. Required for the insertion and/or proper folding and/or complex formation of integral membrane proteins into the membrane. Involved in integration of membrane proteins that insert both dependently and independently of the Sec translocase complex, as well as at least some lipoproteins. Aids folding of multispanning membrane proteins. This is Membrane protein insertase YidC from Vibrio atlanticus (strain LGP32) (Vibrio splendidus (strain Mel32)).